We begin with the raw amino-acid sequence, 170 residues long: Lipoprotein signal peptidase (170 aa).

4 helical membrane-spanning segments follow: residues 11–31 (LSWL…KFYF), 41–61 (IVVI…AAFS), 69–89 (WQRW…VVWL), and 95–115 (NETW…GNLY). Residues Asp-125 and Asp-144 contribute to the active site. A helical transmembrane segment spans residues 136 to 156 (YFPAFNFADSAITVGAVMLAL).

This sequence belongs to the peptidase A8 family.

It is found in the cell inner membrane. It catalyses the reaction Release of signal peptides from bacterial membrane prolipoproteins. Hydrolyzes -Xaa-Yaa-Zaa-|-(S,diacylglyceryl)Cys-, in which Xaa is hydrophobic (preferably Leu), and Yaa (Ala or Ser) and Zaa (Gly or Ala) have small, neutral side chains.. It functions in the pathway protein modification; lipoprotein biosynthesis (signal peptide cleavage). Functionally, this protein specifically catalyzes the removal of signal peptides from prolipoproteins. The sequence is that of Lipoprotein signal peptidase from Pseudomonas fluorescens (strain Pf0-1).